Consider the following 142-residue polypeptide: Nucleoside diphosphate kinase (142 aa).

ATP contacts are provided by Lys11, Phe59, Arg87, Thr93, Arg104, and Asn114. His117 serves as the catalytic Pros-phosphohistidine intermediate.

It belongs to the NDK family. In terms of assembly, homotetramer. Requires Mg(2+) as cofactor.

The protein resides in the cytoplasm. The enzyme catalyses a 2'-deoxyribonucleoside 5'-diphosphate + ATP = a 2'-deoxyribonucleoside 5'-triphosphate + ADP. It carries out the reaction a ribonucleoside 5'-diphosphate + ATP = a ribonucleoside 5'-triphosphate + ADP. Major role in the synthesis of nucleoside triphosphates other than ATP. The ATP gamma phosphate is transferred to the NDP beta phosphate via a ping-pong mechanism, using a phosphorylated active-site intermediate. The polypeptide is Nucleoside diphosphate kinase (Yersinia pseudotuberculosis serotype O:1b (strain IP 31758)).